The chain runs to 150 residues: Protein E6 (150 aa).

2 zinc fingers span residues 31 to 67 (CVFC…CACC) and 104 to 140 (CYLC…CLHC).

This sequence belongs to the papillomaviridae E6 protein family. In terms of assembly, forms homodimers. Interacts with ubiquitin-protein ligase UBE3A/E6-AP; this interaction stimulates UBE3A ubiquitin activity. Interacts with host TP53 and EP300; this interaction inhibits TP53 activity. Interacts with human ZYX.

It localises to the host cytoplasm. It is found in the host nucleus. In terms of biological role, plays a major role in the induction and maintenance of cellular transformation. E6 associates with host UBE3A/E6-AP ubiquitin-protein ligase and modulates its activity. Sequesters tumor suppressor TP53 in the host cytoplasm and modulates its activity by interacting with host EP300 that results in the reduction of TP53 acetylation and activation. In turn, apoptosis induced by DNA damage is inhibited. E6 also protects host keratinocytes from apoptosis by mediating the degradation of host BAK1. May also inhibit host immune response. In Human papillomavirus type 6a, this protein is Protein E6.